The sequence spans 25 residues: Aurein-5.1 (25 aa).

The protein belongs to the frog skin active peptide (FSAP) family. Aurein subfamily. As to expression, expressed by the skin dorsal glands.

Its subcellular location is the secreted. Functionally, has no antimicrobial or anticancer activity. The polypeptide is Aurein-5.1 (Ranoidea aurea (Green and golden bell frog)).